The primary structure comprises 127 residues: SH2 domain-containing protein 1A (127 aa).

The 97-residue stretch at 6–102 (VYHGKISRET…GIVIPLQYPV (97 aa)) folds into the SH2 domain. The tract at residues 67–92 (ETAPGVHKRYFRKIKNLISAFQKPDQ) is interaction with FYN SH3 domain. Position 89 is an N6-acetyllysine (K89). A disordered region spans residues 104-127 (KSSPRSTQGTTGIREDPDVCLKAP). Residues 116–127 (IREDPDVCLKAP) are compositionally biased toward basic and acidic residues.

In terms of assembly, interacts with CD84, CD244, LY9, SLAMF1 and FYN. Interacts with NTRK1, NTRK2 and NTRK3.

It localises to the cytoplasm. Its function is as follows. Cytoplasmic adapter regulating receptors of the signaling lymphocytic activation molecule (SLAM) family such as SLAMF1, CD244, LY9, CD84, SLAMF6 and SLAMF7. In SLAM signaling seems to cooperate with SH2D1B/EAT-2. Initially it has been proposed that association with SLAMF1 prevents SLAMF1 binding to inhibitory effectors including INPP5D/SHIP1 and PTPN11/SHP-2. However, by simultaneous interactions, recruits FYN which subsequently phosphorylates and activates SLAMF1. Positively regulates CD244/2B4- and CD84-mediated natural killer (NK) cell functions. Can also promote CD48-, SLAMF6 -, LY9-, and SLAMF7-mediated NK cell activation. In the context of NK cell-mediated cytotoxicity enhances conjugate formation with target cells. May also regulate the activity of the neurotrophin receptors NTRK1, NTRK2 and NTRK3. This is SH2 domain-containing protein 1A (SH2D1A) from Saguinus oedipus (Cotton-top tamarin).